The following is a 203-amino-acid chain: A-type ATP synthase subunit E (203 aa).

Belongs to the V-ATPase E subunit family. As to quaternary structure, has multiple subunits with at least A(3), B(3), C, D, E, F, H, I and proteolipid K(x).

Its subcellular location is the cell membrane. Functionally, component of the A-type ATP synthase that produces ATP from ADP in the presence of a proton gradient across the membrane. The protein is A-type ATP synthase subunit E of Methanococcus maripaludis (strain DSM 14266 / JCM 13030 / NBRC 101832 / S2 / LL).